We begin with the raw amino-acid sequence, 246 residues long: UDP-N-acetyl-D-mannosaminuronic acid transferase (246 aa).

This sequence belongs to the glycosyltransferase 26 family.

It catalyses the reaction UDP-N-acetyl-alpha-D-mannosaminouronate + N-acetyl-alpha-D-glucosaminyl-di-trans,octa-cis-undecaprenyl diphosphate = beta-D-ManNAcA-(1-&gt;4)-alpha-D-GlcNAc-di-trans,octa-cis-undecaprenyl diphosphate + UDP + H(+). It participates in bacterial outer membrane biogenesis; enterobacterial common antigen biosynthesis. Its function is as follows. Catalyzes the synthesis of Und-PP-GlcNAc-ManNAcA (Lipid II), the second lipid-linked intermediate involved in enterobacterial common antigen (ECA) synthesis. This chain is UDP-N-acetyl-D-mannosaminuronic acid transferase, found in Salmonella arizonae (strain ATCC BAA-731 / CDC346-86 / RSK2980).